The following is a 210-amino-acid chain: MSITSITSITNSVDNTNDLKFQDLPTEIYYLIIKHANLDSQNVMKLIKSDARFFFPILGDLFLEMRKSDSSKRLRQSVGAKPFIPQYLRDKKFENEDVDKFKYPIQIKTKISHLYEFNDFSIVRKPTHWEMKVRIPGKVIPSDLLDKFPGNLLNRNPEYSQITKSTKYTVNIIRSYYYTWTSNKKYKINYHEAICEVWEIRDFLHNHKIL.

This is an uncharacterized protein from Acanthamoeba polyphaga (Amoeba).